The chain runs to 169 residues: Large ribosomal subunit protein uL15 (169 aa).

Positions 1 to 13 (MKLNEIRDNEGAT) are enriched in basic and acidic residues. Residues 1–40 (MKLNEIRDNEGATKNRMRVGRGIGSGKGKTGGRGVKGQKA) are disordered. The segment covering 21-35 (RGIGSGKGKTGGRGV) has biased composition (gly residues).

Belongs to the universal ribosomal protein uL15 family. In terms of assembly, part of the 50S ribosomal subunit.

Functionally, binds to the 23S rRNA. In Methylorubrum populi (strain ATCC BAA-705 / NCIMB 13946 / BJ001) (Methylobacterium populi), this protein is Large ribosomal subunit protein uL15.